The following is a 553-amino-acid chain: Glycine betaine/proline/choline transporter VP1723 (553 aa).

The next 12 membrane-spanning stretches (helical) occupy residues 43-63, 85-105, 122-142, 191-211, 231-251, 278-298, 310-330, 362-382, 393-413, 443-463, 490-510, and 515-535; these read NRVF…TLTF, FFLA…VTPL, AGWL…FFGV, WALH…IFSF, VWGW…VFGL, TQVV…VAGL, MILA…MAIL, WTAF…MFIA, FIIC…TAFG, VMPF…VFFI, VFWC…GGLA, and MAVT…VSLI.

It belongs to the BCCT transporter (TC 2.A.15) family.

The protein resides in the cell inner membrane. Involved in the uptake of osmoprotectants. Can transport glycine betaine, proline and choline. This Vibrio parahaemolyticus serotype O3:K6 (strain RIMD 2210633) protein is Glycine betaine/proline/choline transporter VP1723.